The chain runs to 208 residues: Small ribosomal subunit protein uS4 (208 aa).

The region spanning 98–158 (CRLDTVSYRM…EKAKNHLRIK (61 aa)) is the S4 RNA-binding domain.

Belongs to the universal ribosomal protein uS4 family. Part of the 30S ribosomal subunit. Contacts protein S5. The interaction surface between S4 and S5 is involved in control of translational fidelity.

Its function is as follows. One of the primary rRNA binding proteins, it binds directly to 16S rRNA where it nucleates assembly of the body of the 30S subunit. Functionally, with S5 and S12 plays an important role in translational accuracy. This is Small ribosomal subunit protein uS4 from Nitrosospira multiformis (strain ATCC 25196 / NCIMB 11849 / C 71).